We begin with the raw amino-acid sequence, 885 residues long: Chromatin assembly factor 1 subunit A-B (885 aa).

Disordered stretches follow at residues 1 to 24, 115 to 157, 176 to 361, and 536 to 605; these read MPGKEAAGDVMKSSTKSNTKKMVQ, EDSN…NEEC, LDKP…EEEK, and VDSD…QKLK. The segment covering 12 to 21 has biased composition (low complexity); sequence KSSTKSNTKK. Polar residues-rich tracts occupy residues 116–128, 134–157, and 182–193; these read DSNISTSNDSPLN, QLANGTVSPERSTTNAPLSTNEEC, and SAASCTSVSNFS. 2 stretches are compositionally biased toward low complexity: residues 211–227 and 237–254; these read VSVSSSSSPVSLSSPDV and SSPSTSTTPTGKATSNKT. A coiled-coil region spans residues 251–376; that stretch reads SNKTSAEKKK…KAEITRFLQK (126 aa). The span at 255-361 shows a compositional bias: basic and acidic residues; it reads SAEKKKTKDK…EEKRLKEEEK (107 aa). 2 stretches are compositionally biased toward acidic residues: residues 536 to 548 and 557 to 573; these read VDSDEEWEEEEPG and ENEDDDPKEEEDEDDDG. A necessary for homodimerization, competence for chromatin assembly region spans residues 629 to 665; that stretch reads CVWCDSKASEIRLLQKFSACILESPAVEEELTQDISS.

This sequence belongs to the CHAF1A family. Homodimer.

Its subcellular location is the nucleus. Its function is as follows. Involved in chromatin assembly in DNA replication and DNA repair. This chain is Chromatin assembly factor 1 subunit A-B (chaf1a-b), found in Xenopus laevis (African clawed frog).